Here is a 101-residue protein sequence, read N- to C-terminus: Small ribosomal subunit protein uS14 (101 aa).

This sequence belongs to the universal ribosomal protein uS14 family. Part of the 30S ribosomal subunit. Contacts proteins S3 and S10.

Binds 16S rRNA, required for the assembly of 30S particles and may also be responsible for determining the conformation of the 16S rRNA at the A site. In Pasteurella multocida (strain Pm70), this protein is Small ribosomal subunit protein uS14.